The sequence spans 577 residues: External alternative NAD(P)H-ubiquinone oxidoreductase B1, mitochondrial (577 aa).

The transit peptide at 1 to 35 (MRGFTYLSKVLHSHSSYSKLLVLCSVSTGGLLVYA) directs the protein to the mitochondrion. 57–87 (RVVVLGTGWGGTSFLKDVDISSYDVQVVSPR) contacts FAD. Position 221–257 (221–257 (LHFVIVGGGPTGVEFAAELHDYVYEDLVKIYPSVKDF)) interacts with NAD(+). Residues 378–413 (KVMEDISTIFEAADKDDSGTLSVEEFRDVLEDIIIR) form the EF-hand domain. 5 residues coordinate Ca(2+): D391, D393, S395, T397, and E402. The short motif at 568 to 577 (YIFGRDSSRI) is the Microbody targeting signal element.

This sequence belongs to the NADH dehydrogenase family. FAD is required as a cofactor.

It localises to the mitochondrion inner membrane. The protein resides in the peroxisome. The catalysed reaction is a quinone + NADH + H(+) = a quinol + NAD(+). It catalyses the reaction a ubiquinone + NADH + H(+) = a ubiquinol + NAD(+). With respect to regulation, activity is calcium-dependent with a more pronounced effect at higher pH. Calcium-dependent NAD(P)H dehydrogenase. Binds calcium ions. Alternative NADH-ubiquinone oxidoreductase which catalyzes the oxidation of mitochondrial NADH does not translocate protons across the inner mitochondrial membrane. The chain is External alternative NAD(P)H-ubiquinone oxidoreductase B1, mitochondrial (NDB1) from Solanum tuberosum (Potato).